Reading from the N-terminus, the 1117-residue chain is Reverse gyrase (1117 aa).

An RG N-terminal-type zinc finger spans residues 3-42 (LATGAKYYHSCINCGGINTDTRNEKGLPCEVCLPFEDGDV). Zn(2+) contacts are provided by C13, C16, C31, and C34. Residues Q84 and 101–108 (APTGVGKT) contribute to the ATP site. The 197-residue stretch at 88-284 (AKRLLLSKSF…LFRELLGFEI (197 aa)) folds into the Helicase ATP-binding domain. The DEAD box motif lies at 206-209 (DDVD). Residues 551-1117 (KDMKSRMIIV…EELNEILIKN (567 aa)) form a topoisomerase I region. The region spanning 555–712 (SRMIIVESPT…NVQRIEMHEI (158 aa)) is the Toprim domain. E561 contacts Mg(2+). The segment at 631–658 (IKRCSSCGAQFTDELPRCPYCNSDKIDD) adopts an RG C-terminal-type zinc-finger fold. C634, C637, C648, and C651 together coordinate Zn(2+). D681 is a Mg(2+) binding site. Residues 728–1114 (DVNLVKSQIV…NLYEELNEIL (387 aa)) form the Topo IA-type catalytic domain. The active-site O-(5'-phospho-DNA)-tyrosine intermediate is Y864.

In the N-terminal section; belongs to the DEAD box helicase family. DDVD subfamily. This sequence in the C-terminal section; belongs to the type IA topoisomerase family. In terms of assembly, monomer. Zn(2+) is required as a cofactor. It depends on Mg(2+) as a cofactor.

It is found in the cytoplasm. The catalysed reaction is ATP + H2O = ADP + phosphate + H(+). In terms of biological role, modifies the topological state of DNA by introducing positive supercoils in an ATP-dependent process, increasing the linking number in steps of +1; also positively supercoils with dATP and ATP-gamma-S. With UTP or dTTP relaxes negatively supercoiled DNA, in the absence of any nucleotide partially relaxes negative supercoils. In the absence of nucleotide has a higher affinity for dsDNA with a single-stranded tail than dsDNA or ssDNA. Has an ATPase activity in the absence of DNA. Binds to single-stranded DNA, transiently cleaves and then rejoins the ends, introducing a positive supercoil in the process. The scissile phosphodiester is attacked by the catalytic tyrosine of the enzyme, resulting in the formation of a DNA-(5'-phosphotyrosyl)-enzyme intermediate. Probably involved in rewinding DNA strands in regions of the chromosome that have opened up to allow replication, transcription, DNA repair and/or for DNA protection. This chain is Reverse gyrase, found in Caldanaerobacter subterraneus subsp. tengcongensis (strain DSM 15242 / JCM 11007 / NBRC 100824 / MB4) (Thermoanaerobacter tengcongensis).